Consider the following 108-residue polypeptide: MTEQNHILDAVYGVILARKATQTENSYTASLMRKGLDSVLKKVGEEATELVIAGKGGVADEVVYEAADLFFHTLLLLSYQDIPLERVYTELRRRFGISGIDEKNSRTT.

It belongs to the PRA-PH family.

The protein localises to the cytoplasm. It carries out the reaction 1-(5-phospho-beta-D-ribosyl)-ATP + H2O = 1-(5-phospho-beta-D-ribosyl)-5'-AMP + diphosphate + H(+). It functions in the pathway amino-acid biosynthesis; L-histidine biosynthesis; L-histidine from 5-phospho-alpha-D-ribose 1-diphosphate: step 2/9. The chain is Phosphoribosyl-ATP pyrophosphatase from Pelobacter propionicus (strain DSM 2379 / NBRC 103807 / OttBd1).